The following is a 307-amino-acid chain: Fructokinase (307 aa).

Belongs to the carbohydrate kinase PfkB family.

The enzyme catalyses D-fructose + ATP = D-fructose 6-phosphate + ADP + H(+). In terms of biological role, involved in sucrose metabolism. This is Fructokinase (scrK) from Klebsiella pneumoniae.